A 446-amino-acid chain; its full sequence is Adenylosuccinate synthetase (446 aa).

Residues 20–26 and 48–50 each bind GTP; these read GDEGKGK and GHT. Aspartate 21 (proton acceptor) is an active-site residue. Positions 21 and 48 each coordinate Mg(2+). Residues 21–24, 46–49, threonine 137, arginine 151, glutamine 232, threonine 247, and arginine 319 contribute to the IMP site; these read DEGK and NAGH. Residue histidine 49 is the Proton donor of the active site. 315–321 lines the substrate pocket; the sequence is SVTGRPR. Residues arginine 321, 347-349, and 429-431 contribute to the GTP site; these read KLD and STG.

It belongs to the adenylosuccinate synthetase family. Homodimer. It depends on Mg(2+) as a cofactor.

It localises to the cytoplasm. It catalyses the reaction IMP + L-aspartate + GTP = N(6)-(1,2-dicarboxyethyl)-AMP + GDP + phosphate + 2 H(+). Its pathway is purine metabolism; AMP biosynthesis via de novo pathway; AMP from IMP: step 1/2. Functionally, plays an important role in the de novo pathway of purine nucleotide biosynthesis. Catalyzes the first committed step in the biosynthesis of AMP from IMP. In Polynucleobacter necessarius subsp. necessarius (strain STIR1), this protein is Adenylosuccinate synthetase.